The primary structure comprises 440 residues: Thymidine phosphorylase (440 aa).

It belongs to the thymidine/pyrimidine-nucleoside phosphorylase family. As to quaternary structure, homodimer.

It catalyses the reaction thymidine + phosphate = 2-deoxy-alpha-D-ribose 1-phosphate + thymine. Its pathway is pyrimidine metabolism; dTMP biosynthesis via salvage pathway; dTMP from thymine: step 1/2. The enzymes which catalyze the reversible phosphorolysis of pyrimidine nucleosides are involved in the degradation of these compounds and in their utilization as carbon and energy sources, or in the rescue of pyrimidine bases for nucleotide synthesis. In Salmonella choleraesuis (strain SC-B67), this protein is Thymidine phosphorylase.